A 465-amino-acid chain; its full sequence is 3-isopropylmalate dehydratase large subunit (465 aa).

[4Fe-4S] cluster contacts are provided by C347, C407, and C410.

Belongs to the aconitase/IPM isomerase family. LeuC type 1 subfamily. As to quaternary structure, heterodimer of LeuC and LeuD. [4Fe-4S] cluster is required as a cofactor.

The catalysed reaction is (2R,3S)-3-isopropylmalate = (2S)-2-isopropylmalate. The protein operates within amino-acid biosynthesis; L-leucine biosynthesis; L-leucine from 3-methyl-2-oxobutanoate: step 2/4. In terms of biological role, catalyzes the isomerization between 2-isopropylmalate and 3-isopropylmalate, via the formation of 2-isopropylmaleate. The chain is 3-isopropylmalate dehydratase large subunit from Aeromonas salmonicida (strain A449).